Here is a 334-residue protein sequence, read N- to C-terminus: Glyceraldehyde-3-phosphate dehydrogenase 1 (334 aa).

Residues 12–13, Asp35, and Arg79 each bind NAD(+); that span reads RI. D-glyceraldehyde 3-phosphate-binding positions include 152 to 154, Thr183, Arg198, 211 to 212, and Arg234; these read SCT and SG. Residue Cys153 is the Nucleophile of the active site. Asn315 lines the NAD(+) pocket.

The protein belongs to the glyceraldehyde-3-phosphate dehydrogenase family. Homotetramer.

It is found in the cytoplasm. The enzyme catalyses D-glyceraldehyde 3-phosphate + phosphate + NAD(+) = (2R)-3-phospho-glyceroyl phosphate + NADH + H(+). The protein operates within carbohydrate degradation; glycolysis; pyruvate from D-glyceraldehyde 3-phosphate: step 1/5. Resistant to pentalenolactone. Its function is as follows. Catalyzes the oxidative phosphorylation of glyceraldehyde 3-phosphate (G3P) to 1,3-bisphosphoglycerate (BPG) using the cofactor NAD. The first reaction step involves the formation of a hemiacetal intermediate between G3P and a cysteine residue, and this hemiacetal intermediate is then oxidized to a thioester, with concomitant reduction of NAD to NADH. The reduced NADH is then exchanged with the second NAD, and the thioester is attacked by a nucleophilic inorganic phosphate to produce BPG. The polypeptide is Glyceraldehyde-3-phosphate dehydrogenase 1 (gap1) (Streptomyces avermitilis (strain ATCC 31267 / DSM 46492 / JCM 5070 / NBRC 14893 / NCIMB 12804 / NRRL 8165 / MA-4680)).